A 60-amino-acid polypeptide reads, in one-letter code: Potassium channel toxin MeuTXKalpha3 (60 aa).

A signal peptide spans 1 to 22 (MKNYCGIITLFLAIISATGVFC). Cystine bridges form between C32–C50, C37–C55, and C41–C57. At P59 the chain carries Proline amide.

The protein belongs to the short scorpion toxin superfamily. Potassium channel inhibitor family. As to expression, expressed by the venom gland.

It localises to the secreted. May block voltage-gated potassium channels (Kv). The sequence is that of Potassium channel toxin MeuTXKalpha3 from Mesobuthus eupeus (Lesser Asian scorpion).